Here is a 736-residue protein sequence, read N- to C-terminus: Eukaryotic translation initiation factor 3 subunit B (736 aa).

The interval 1 to 94 is sufficient for interaction with HCR1 and TIF32; sequence MAAVFDDIRL…LFIEFEDAGA (94 aa). The segment at 1 to 219 is sufficient for interaction with PIC8; the sequence is MAAVFDDIRL…GIASWGGPQF (219 aa). Residues 37–120 form the RRM domain; sequence RYVVVDGAPV…HRLWVNGLDD (84 aa). 10 WD repeats span residues 140–182, 186–224, 226–244, 245–284, 288–328, 332–375, 443–483, 511–557, 566–604, and 616–662; these read EFEA…PENV, RRNW…RLRR, AHPD…YLVT, FSSE…CVKT, PPQQ…QLLG, MKIE…QSCK, EIKD…VSFY, AIDG…TEKI, ATLR…KAEN, and VREE…QDAM.

It belongs to the eIF-3 subunit B family. In terms of assembly, component of the eukaryotic translation initiation factor 3 (eIF-3) complex.

It localises to the cytoplasm. Functionally, RNA-binding component of the eukaryotic translation initiation factor 3 (eIF-3) complex, which is involved in protein synthesis of a specialized repertoire of mRNAs and, together with other initiation factors, stimulates binding of mRNA and methionyl-tRNAi to the 40S ribosome. The eIF-3 complex specifically targets and initiates translation of a subset of mRNAs involved in cell proliferation. This chain is Eukaryotic translation initiation factor 3 subunit B, found in Eremothecium gossypii (strain ATCC 10895 / CBS 109.51 / FGSC 9923 / NRRL Y-1056) (Yeast).